The sequence spans 316 residues: Galectin-8 (316 aa).

Galectin domains lie at 18 to 151 (YVST…IGFR) and 186 to 316 (FEAR…VRSW). The a carbohydrate site is built by Arg-68, Asn-78, and Glu-88. 248-254 (WGEEERN) provides a ligand contact to a beta-D-galactoside.

As to quaternary structure, homodimer. Interacts with CALCOCO2/NDP52. Interacts with PDPN; the interaction is glycosylation-dependent; may participate in connection of the lymphatic endothelium to the surrounding extracellular matrix. As to expression, expressed in liver, kidney, cardiac muscle, lung, and brain.

It localises to the cytoplasmic vesicle. The protein resides in the cytoplasm. The protein localises to the cytosol. In terms of biological role, beta-galactoside-binding lectin that acts as a sensor of membrane damage caused by infection and restricts the proliferation of infecting pathogens by targeting them for autophagy. Detects membrane rupture by binding beta-galactoside ligands located on the lumenal side of the endosome membrane; these ligands becoming exposed to the cytoplasm following rupture. Restricts infection by initiating autophagy via interaction with CALCOCO2/NDP52. Required to restrict infection of bacterial invasion such as S.typhimurium. Also required to restrict infection of Picornaviridae viruses. Has a marked preference for 3'-O-sialylated and 3'-O-sulfated glycans. This Rattus norvegicus (Rat) protein is Galectin-8 (Lgals8).